Here is a 163-residue protein sequence, read N- to C-terminus: ATP synthase subunit delta, chloroplastic (163 aa).

Belongs to the ATPase delta chain family. In terms of assembly, F-type ATPases have 2 components, F(1) - the catalytic core - and F(0) - the membrane proton channel. F(1) has five subunits: alpha(3), beta(3), gamma(1), delta(1), epsilon(1). CF(0) has four main subunits: a(1), b(1), b'(1) and c(10-14). The alpha and beta chains form an alternating ring which encloses part of the gamma chain. F(1) is attached to F(0) by a central stalk formed by the gamma and epsilon chains, while a peripheral stalk is formed by the delta, b and b' chains.

The protein localises to the plastid. The protein resides in the chloroplast thylakoid membrane. Functionally, f(1)F(0) ATP synthase produces ATP from ADP in the presence of a proton or sodium gradient. F-type ATPases consist of two structural domains, F(1) containing the extramembraneous catalytic core and F(0) containing the membrane proton channel, linked together by a central stalk and a peripheral stalk. During catalysis, ATP synthesis in the catalytic domain of F(1) is coupled via a rotary mechanism of the central stalk subunits to proton translocation. This protein is part of the stalk that links CF(0) to CF(1). It either transmits conformational changes from CF(0) to CF(1) or is implicated in proton conduction. In Cyanidioschyzon merolae (strain NIES-3377 / 10D) (Unicellular red alga), this protein is ATP synthase subunit delta, chloroplastic.